We begin with the raw amino-acid sequence, 673 residues long: Hemocyanin subunit C (673 aa).

The N-terminal stretch at 1-20 (MGAWKVWTFFAIALVVAVKA) is a signal peptide. Cu cation contacts are provided by histidine 207, histidine 211, and histidine 237. The N-linked (GlcNAc...) asparagine glycan is linked to asparagine 323. 3 residues coordinate Cu cation: histidine 358, histidine 362, and histidine 398. Cysteine 568 and cysteine 616 form a disulfide bridge.

Belongs to the tyrosinase family. Hemocyanin subfamily. In terms of assembly, 36-chain polymer consisting of 6 hexamers, each of which includes 4 different chains, A, B, C and D. In terms of tissue distribution, hemolymph.

It is found in the secreted. It localises to the extracellular space. In terms of biological role, hemocyanins are copper-containing oxygen carriers occurring freely dissolved in the hemolymph of many mollusks and arthropods. The protein is Hemocyanin subunit C (HCC) of Scutigera coleoptrata (House centipede).